A 179-amino-acid chain; its full sequence is Large ribosomal subunit protein uL5 (179 aa).

It belongs to the universal ribosomal protein uL5 family. Part of the 50S ribosomal subunit; part of the 5S rRNA/L5/L18/L25 subcomplex. Contacts the 5S rRNA and the P site tRNA. Forms a bridge to the 30S subunit in the 70S ribosome.

In terms of biological role, this is one of the proteins that bind and probably mediate the attachment of the 5S RNA into the large ribosomal subunit, where it forms part of the central protuberance. In the 70S ribosome it contacts protein S13 of the 30S subunit (bridge B1b), connecting the 2 subunits; this bridge is implicated in subunit movement. Contacts the P site tRNA; the 5S rRNA and some of its associated proteins might help stabilize positioning of ribosome-bound tRNAs. The chain is Large ribosomal subunit protein uL5 from Shewanella denitrificans (strain OS217 / ATCC BAA-1090 / DSM 15013).